A 259-amino-acid polypeptide reads, in one-letter code: Ribonuclease HII (259 aa).

Residues 70–258 (TLIAGIDEVG…VKSLVLGKKE (189 aa)) form the RNase H type-2 domain. A divalent metal cation contacts are provided by aspartate 76, glutamate 77, and aspartate 168.

This sequence belongs to the RNase HII family. Requires Mn(2+) as cofactor. The cofactor is Mg(2+).

The protein localises to the cytoplasm. The catalysed reaction is Endonucleolytic cleavage to 5'-phosphomonoester.. Its function is as follows. Endonuclease that specifically degrades the RNA of RNA-DNA hybrids. This Streptococcus pneumoniae (strain Taiwan19F-14) protein is Ribonuclease HII.